The following is a 193-amino-acid chain: Cysteine and glycine-rich protein 1 (193 aa).

The LIM zinc-binding 1 domain occupies 10 to 61; sequence CGVCQKTVYFAEEVQCEGNSFHKSCFLCMVCKKNLDSTTVAVHGEEIYCKSC. The Nuclear localization signal signature appears at 64-69; the sequence is KKYGPK. Phosphoserine is present on serine 81. N6-acetyllysine is present on lysine 84. A Glycyl lysine isopeptide (Lys-Gly) (interchain with G-Cter in SUMO2) cross-link involves residue lysine 91. 4 positions are modified to N6-acetyllysine: lysine 112, lysine 131, lysine 137, and lysine 161. The region spanning 119 to 170 is the LIM zinc-binding 2 domain; the sequence is CPRCSQAVYAAEKVIGAGKSWHKACFRCAKCGKGLESTTLADKDGEIYCKGC. Serine 192 carries the post-translational modification Phosphoserine.

In terms of assembly, interacts with ASCC1; ASCC2 and TRIP4.

The protein localises to the nucleus. Could play a role in neuronal development. The chain is Cysteine and glycine-rich protein 1 (CSRP1) from Pongo abelii (Sumatran orangutan).